A 275-amino-acid chain; its full sequence is Caspase-3 (275 aa).

The residue at position 1 (Met1) is an N-acetylmethionine. 2 consecutive propeptides follow at residues 1–9 and 10–28; these read MENTENSVD and SKSI…KSMD. Lys11 is subject to N6-acetyllysine. Ser26 carries the phosphoserine modification. Active-site residues include His121 and Cys163. An S-nitrosocysteine; in inhibited form modification is found at Cys163.

This sequence belongs to the peptidase C14A family. In terms of assembly, heterotetramer that consists of two anti-parallel arranged heterodimers, each one formed by a 17 kDa (p17) and a 12 kDa (p12) subunit. Interacts with BIRC6/bruce. In terms of processing, cleavage by granzyme B, caspase-6, caspase-8 and caspase-10 generates the two active subunits. Additional processing of the propeptides is likely due to the autocatalytic activity of the activated protease. Active heterodimers between the small subunit of caspase-7 protease and the large subunit of caspase-3 also occur and vice versa. Post-translationally, S-nitrosylated on its catalytic site cysteine in unstimulated cell lines and denitrosylated upon activation of the Fas apoptotic pathway, associated with an increase in intracellular caspase activity. Fas therefore activates caspase-3 not only by inducing the cleavage of the caspase zymogen to its active subunits, but also by stimulating the denitrosylation of its active site thiol. Ubiquitinated by BIRC6; this activity is inhibited by DIABLO/SMAC.

It is found in the cytoplasm. It carries out the reaction Strict requirement for an Asp residue at positions P1 and P4. It has a preferred cleavage sequence of Asp-Xaa-Xaa-Asp-|- with a hydrophobic amino-acid residue at P2 and a hydrophilic amino-acid residue at P3, although Val or Ala are also accepted at this position.. Its activity is regulated as follows. Inhibited by BIRC6; following inhibition of BIRC6-caspase binding by DIABLO/SMAC, BIRC6 is subjected to caspase cleavage, leading to an increase in active caspases. Involved in the activation cascade of caspases responsible for apoptosis execution. At the onset of apoptosis, it proteolytically cleaves poly(ADP-ribose) polymerase PARP1 at a '216-Asp-|-Gly-217' bond. Cleaves and activates sterol regulatory element binding proteins (SREBPs) between the basic helix-loop-helix leucine zipper domain and the membrane attachment domain. Cleaves and activates caspase-6, -7 and -9 (CASP6, CASP7 and CASP9, respectively). Cleaves and inactivates interleukin-18 (IL18). Triggers cell adhesion in sympathetic neurons through RET cleavage. Cleaves IL-1 beta between an Asp and an Ala, releasing the mature cytokine which is involved in a variety of inflammatory processes. Cleaves and inhibits serine/threonine-protein kinase AKT1 in response to oxidative stress. Acts as an inhibitor of type I interferon production during virus-induced apoptosis by mediating cleavage of antiviral proteins CGAS, IRF3 and MAVS, thereby preventing cytokine overproduction. Also involved in pyroptosis by mediating cleavage and activation of gasdermin-E (GSDME). Cleaves XRCC4 and phospholipid scramblase proteins XKR4, XKR8 and XKR9, leading to promote phosphatidylserine exposure on apoptotic cell surface. Cleaves BIRC6 following inhibition of BIRC6-caspase binding by DIABLO/SMAC. This chain is Caspase-3 (CASP3), found in Bos taurus (Bovine).